The sequence spans 101 residues: Cyanovirin-N (101 aa).

Cystine bridges form between Cys-8–Cys-22 and Cys-58–Cys-73.

It belongs to the cyanovirin-N family. In terms of assembly, in solution exists as a metastable domain-swapped homodimer which very slowly converts into a more stable monomeric form at room temperature. Under physiological conditions it is unlikely that the dimeric species exists and indeed the monomer is more active against HIV. Interacts with HIV-1 gp120. In terms of processing, cleavage, or reduction and alkylation of the disulfide bonds results in the loss of anti-HIV activity.

Its function is as follows. Mannose-binding lectin. In Nostoc ellipsosporum, this protein is Cyanovirin-N.